The following is a 185-amino-acid chain: UPF0397 protein AYWB_013 (185 aa).

5 helical membrane-spanning segments follow: residues 13-33 (IGLS…PVGF), 42-62 (AFLA…VGLI), 69-89 (FFLF…IGFI), 109-129 (IVYF…FFAP), and 148-168 (FLIV…LMTI).

The protein belongs to the UPF0397 family.

It is found in the cell membrane. In Aster yellows witches'-broom phytoplasma (strain AYWB), this protein is UPF0397 protein AYWB_013.